A 93-amino-acid polypeptide reads, in one-letter code: Small ribosomal subunit protein bS18 (93 aa).

Belongs to the bacterial ribosomal protein bS18 family. In terms of assembly, part of the 30S ribosomal subunit. Forms a tight heterodimer with protein bS6.

Functionally, binds as a heterodimer with protein bS6 to the central domain of the 16S rRNA, where it helps stabilize the platform of the 30S subunit. The sequence is that of Small ribosomal subunit protein bS18 from Variovorax paradoxus (strain S110).